Consider the following 206-residue polypeptide: Large ribosomal subunit protein uL3 (206 aa).

Positions 116–149 are disordered; sequence GFQGAIKRHNQSRGPMSHGSRYHRRPGSMGPVAP.

This sequence belongs to the universal ribosomal protein uL3 family. In terms of assembly, part of the 50S ribosomal subunit. Forms a cluster with proteins L14 and L19.

In terms of biological role, one of the primary rRNA binding proteins, it binds directly near the 3'-end of the 23S rRNA, where it nucleates assembly of the 50S subunit. This is Large ribosomal subunit protein uL3 from Shouchella clausii (strain KSM-K16) (Alkalihalobacillus clausii).